A 474-amino-acid polypeptide reads, in one-letter code: ATP synthase subunit beta (474 aa).

153 to 160 (GGAGVGKT) serves as a coordination point for ATP.

The protein belongs to the ATPase alpha/beta chains family. F-type ATPases have 2 components, CF(1) - the catalytic core - and CF(0) - the membrane proton channel. CF(1) has five subunits: alpha(3), beta(3), gamma(1), delta(1), epsilon(1). CF(0) has three main subunits: a(1), b(2) and c(9-12). The alpha and beta chains form an alternating ring which encloses part of the gamma chain. CF(1) is attached to CF(0) by a central stalk formed by the gamma and epsilon chains, while a peripheral stalk is formed by the delta and b chains.

It is found in the cell inner membrane. It catalyses the reaction ATP + H2O + 4 H(+)(in) = ADP + phosphate + 5 H(+)(out). Its function is as follows. Produces ATP from ADP in the presence of a proton gradient across the membrane. The catalytic sites are hosted primarily by the beta subunits. In Rickettsia prowazekii (strain Madrid E), this protein is ATP synthase subunit beta.